The primary structure comprises 210 residues: Ras-related protein RABC2a (210 aa).

20–27 (GDSGVGKS) provides a ligand contact to GTP. The Effector region motif lies at 41-49 (LAPTIGVDF). Residues 67-71 (DTAGQ), 127-130 (NKVD), and 157-158 (SA) contribute to the GTP site. Residues Cys-208 and Cys-209 are each lipidated (S-geranylgeranyl cysteine).

This sequence belongs to the small GTPase superfamily. Rab family. As to quaternary structure, interacts with XI-2/MYA2.

The protein localises to the cell membrane. Its subcellular location is the cytoplasm. Intracellular vesicle trafficking and protein transport. In Arabidopsis thaliana (Mouse-ear cress), this protein is Ras-related protein RABC2a (RABC2A).